A 916-amino-acid polypeptide reads, in one-letter code: Translation initiation factor IF-2 (916 aa).

Residues 58–317 (LEAEGHLPGA…GVTVPRGDGG (260 aa)) form a disordered region. Low complexity predominate over residues 120–142 (EKVAASEAADAKPAAGAPADTAK). Residues 195 to 206 (SNIPRPAPPRPG) are compositionally biased toward pro residues. Composition is skewed to gly residues over residues 214–227 (RPGG…GGRP) and 235–282 (SAGG…GRGG). Over residues 283-294 (GKSKARKSKRAK) the composition is skewed to basic residues. In terms of domain architecture, tr-type G spans 409–583 (IRPPVVTVMG…LTADAGLDLR (175 aa)). The segment at 418-425 (GHVDHGKT) is G1. Residue 418–425 (GHVDHGKT) participates in GTP binding. A G2 region spans residues 443–447 (GITQH). Positions 468-471 (DTPG) are G3. GTP contacts are provided by residues 468 to 472 (DTPGH) and 522 to 525 (NKVD). Residues 522-525 (NKVD) are G4. Residues 558-560 (SAR) are G5.

This sequence belongs to the TRAFAC class translation factor GTPase superfamily. Classic translation factor GTPase family. IF-2 subfamily.

The protein resides in the cytoplasm. Its function is as follows. One of the essential components for the initiation of protein synthesis. Protects formylmethionyl-tRNA from spontaneous hydrolysis and promotes its binding to the 30S ribosomal subunits. Also involved in the hydrolysis of GTP during the formation of the 70S ribosomal complex. In Leifsonia xyli subsp. xyli (strain CTCB07), this protein is Translation initiation factor IF-2.